The primary structure comprises 384 residues: MSEYSIFTSESVSEGHPDKMADQISDAVLDAILKDDKHARVAVETLVKTGMAIVAGEVRTSTYVDLEDLIRQVILDIGYNSSDVGFDGASCAVINAIGKQSADIAMGVDEAENKDMGAGDQGLMFGYATNETDVLMPAPIYYSHRLVEKQAELRKSGAHAWSRPDAKSQVTLRYENGKPVAVDAVVLSTQHAPGVSQAQIHEAVMEEIIKPVLPAEWLHSNTKYHINPTGQFIIGGPVGDCGLTGRKIIVDTYGGMARHGGGAFSGKDPSKVDRSAAYAGRYVAKNIVAAGLADRCEIQVSYAIGVAEPTSISVNTFGTGKIDDGKIVELVKEHFDLRPRGLIEMLDLMRPIYRKTAAYGHFGRELPEFTWEITDKADVLKAAL.

His16 serves as a coordination point for ATP. Residue Asp18 participates in Mg(2+) binding. Glu44 is a K(+) binding site. L-methionine is bound by residues Glu57 and Gln100. The tract at residues 100-110 (QSADIAMGVDE) is flexible loop. Residues 165–167 (DAK), Asp240, 246–247 (RK), Ala263, and Lys267 contribute to the ATP site. Residue Asp240 coordinates L-methionine. Lys271 lines the L-methionine pocket.

Belongs to the AdoMet synthase family. Homotetramer; dimer of dimers. Mg(2+) is required as a cofactor. Requires K(+) as cofactor.

Its subcellular location is the cytoplasm. It carries out the reaction L-methionine + ATP + H2O = S-adenosyl-L-methionine + phosphate + diphosphate. The protein operates within amino-acid biosynthesis; S-adenosyl-L-methionine biosynthesis; S-adenosyl-L-methionine from L-methionine: step 1/1. Functionally, catalyzes the formation of S-adenosylmethionine (AdoMet) from methionine and ATP. The overall synthetic reaction is composed of two sequential steps, AdoMet formation and the subsequent tripolyphosphate hydrolysis which occurs prior to release of AdoMet from the enzyme. The chain is S-adenosylmethionine synthase from Teredinibacter turnerae (strain ATCC 39867 / T7901).